A 239-amino-acid chain; its full sequence is MSDINIKIGLAEMLKGGVIMDVVNAEQAEIAQQAGAVAVMALERVPADIRKDGGIARMSDPKLIKEIMSVVSIPVMAKARIGHFVEAQILESLGVDFIDESEVLTPADELNHIDKDSFKVPFVCGCTNLGEALRRIGEGAALIRTKGEAGTGNIVEAVRQLRQVNKDINYIKNADKSELMAIAKNLQAPYDLVTYVHKNGKLPVPNFSAGGVATPADAALMMQLGAESVFVGSGIFKSA.

Asp21 is a D-ribose 5-phosphate binding site. Lys78 acts as the Schiff-base intermediate with D-ribose 5-phosphate in catalysis. Gly150 contributes to the D-ribose 5-phosphate binding site. Arg162 serves as a coordination point for D-glyceraldehyde 3-phosphate. D-ribose 5-phosphate is bound by residues Gly211 and 232 to 233; that span reads GS.

Belongs to the PdxS/SNZ family. As to quaternary structure, in the presence of PdxT, forms a dodecamer of heterodimers.

The catalysed reaction is aldehydo-D-ribose 5-phosphate + D-glyceraldehyde 3-phosphate + L-glutamine = pyridoxal 5'-phosphate + L-glutamate + phosphate + 3 H2O + H(+). The protein operates within cofactor biosynthesis; pyridoxal 5'-phosphate biosynthesis. Functionally, catalyzes the formation of pyridoxal 5'-phosphate from ribose 5-phosphate (RBP), glyceraldehyde 3-phosphate (G3P) and ammonia. The ammonia is provided by the PdxT subunit. Can also use ribulose 5-phosphate and dihydroxyacetone phosphate as substrates, resulting from enzyme-catalyzed isomerization of RBP and G3P, respectively. This Francisella tularensis protein is Pyridoxal 5'-phosphate synthase subunit PdxS.